A 277-amino-acid polypeptide reads, in one-letter code: Large ribosomal subunit protein uL2 (277 aa).

The disordered stretch occupies residues 222 to 277 (GVAMNPVDHPHGGGEGRTSGGRHPVSPWGKPTKGKRTRSNKATDKFIMRSRHQRKK).

Belongs to the universal ribosomal protein uL2 family. In terms of assembly, part of the 50S ribosomal subunit. Forms a bridge to the 30S subunit in the 70S ribosome.

Functionally, one of the primary rRNA binding proteins. Required for association of the 30S and 50S subunits to form the 70S ribosome, for tRNA binding and peptide bond formation. It has been suggested to have peptidyltransferase activity; this is somewhat controversial. Makes several contacts with the 16S rRNA in the 70S ribosome. The polypeptide is Large ribosomal subunit protein uL2 (Bartonella bacilliformis (strain ATCC 35685 / KC583 / Herrer 020/F12,63)).